Here is a 29-residue protein sequence, read N- to C-terminus: Cytochrome b6-f complex subunit 8 (29 aa).

A helical transmembrane segment spans residues 3-23 (IISIGWVSLMVVFTFSISLVV).

This sequence belongs to the PetN family. The 4 large subunits of the cytochrome b6-f complex are cytochrome b6, subunit IV (17 kDa polypeptide, PetD), cytochrome f and the Rieske protein, while the 4 small subunits are PetG, PetL, PetM and PetN. The complex functions as a dimer.

Its subcellular location is the plastid. It localises to the chloroplast thylakoid membrane. Functionally, component of the cytochrome b6-f complex, which mediates electron transfer between photosystem II (PSII) and photosystem I (PSI), cyclic electron flow around PSI, and state transitions. The chain is Cytochrome b6-f complex subunit 8 from Staurastrum punctulatum (Green alga).